A 1250-amino-acid polypeptide reads, in one-letter code: Myosin-1 (1250 aa).

The tract at residues methionine 1–phenylalanine 43 is disordered. One can recognise a Myosin motor domain in the interval isoleucine 51 to aspartate 730. Residue glycine 144–threonine 151 coordinates ATP. The residue at position 372 (serine 372) is a Phosphoserine. The segment at serine 419 to alanine 501 is actin-binding. IQ domains follow at residues histidine 734–cysteine 754 and alanine 755–glutamine 780. The region spanning arginine 788–alanine 978 is the TH1 domain. 2 disordered regions span residues aspartate 962–proline 1079 and tryptophan 1126–tryptophan 1250. A compositionally biased stretch (pro residues) spans alanine 1021–proline 1035. The segment covering glutamine 1036–alanine 1051 has biased composition (low complexity). Composition is skewed to pro residues over residues alanine 1064–lysine 1077 and threonine 1139–alanine 1151. Residues proline 1076 to alanine 1137 enclose the SH3 domain. The segment covering proline 1152–lysine 1170 has biased composition (low complexity). Positions valine 1201–asparagine 1222 are enriched in polar residues. Low complexity predominate over residues alanine 1223–alanine 1232.

The protein belongs to the TRAFAC class myosin-kinesin ATPase superfamily. Myosin family. Phosphorylation of the TEDS site (Ser-372) is required for the polarization of the actin cytoskeleton. Phosphorylation probably activates the myosin-I ATPase activity.

The protein localises to the cytoplasm. It localises to the cytoskeleton. Its subcellular location is the actin patch. Type-I myosin implicated in the organization of the actin cytoskeleton. Required for proper actin cytoskeleton polarization. At the cell cortex, assembles in patch-like structures together with proteins from the actin-polymerizing machinery and promotes actin assembly. Functions as actin nucleation-promoting factor (NPF) for the Arp2/3 complex. Plays an important role in polarized growth, spore germination, hyphal morphogenesis, and septal wall formation. The chain is Myosin-1 (myoA) from Neosartorya fischeri (strain ATCC 1020 / DSM 3700 / CBS 544.65 / FGSC A1164 / JCM 1740 / NRRL 181 / WB 181) (Aspergillus fischerianus).